A 798-amino-acid polypeptide reads, in one-letter code: Palmitoyl thioesterase CPT1C (798 aa).

Topologically, residues 1 to 52 are cytoplasmic; sequence MAEAHQASSLLSSLSSDGAEVELSSPVWQEIYLCALRSWKRHLWRVWNDFLA. A helical membrane pass occupies residues 53 to 75; that stretch reads GVVPATPLSWLFLFSTIQLACLL. The Lumenal portion of the chain corresponds to 76–103; it reads QLDPSLGLMEKIKELLPDWGGQHHQLQG. A helical membrane pass occupies residues 104-126; that stretch reads FLSAAVFASCLWGALIFTLHVAL. Topologically, residues 127-798 are cytoplasmic; the sequence is RLLLSHHGWL…PNTPTSSTNL (672 aa). His-469 (proton acceptor) is an active-site residue. 551-563 contributes to the CoA binding site; that stretch reads GKSFIKCCHVSSD. (R)-carnitine contacts are provided by Tyr-585, Ser-587, and Thr-598. The tract at residues 759-798 is required for interaction with GRIA1; it reads LFRVGQHFKRQFRGENSDYRYNFLSCKTVDPNTPTSSTNL.

The protein belongs to the carnitine/choline acetyltransferase family. As to quaternary structure, peripherally associated with AMPAR complex. AMPAR complex consists of an inner core made of 4 pore-forming GluA/GRIA proteins (GRIA1, GRIA2, GRIA3 and GRIA4) and 4 major auxiliary subunits arranged in a twofold symmetry. One of the two pairs of distinct binding sites is occupied either by CNIH2, CNIH3 or CACNG2, CACNG3. The other harbors CACNG2, CACNG3, CACNG4, CACNG8 or GSG1L. This inner core of AMPAR complex is complemented by outer core constituents binding directly to the GluA/GRIA proteins at sites distinct from the interaction sites of the inner core constituents. Outer core constituents include at least PRRT1, PRRT2, CKAMP44/SHISA9, FRRS1L and NRN1. The proteins of the inner and outer core serve as a platform for other, more peripherally associated AMPAR constituents, including CPT1C. Alone or in combination, these auxiliary subunits control the gating and pharmacology of the AMPAR complex and profoundly impact their biogenesis and protein processing. Interacts with SACM1L; the interaction regulates SACM1L phosphatidylinositol-3-phosphatase activity and translocation to endoplasmic reticulum/trans Golgi network in a malonyl-CoA dependent manner. Interacts with ATL1. In terms of tissue distribution, predominantly expressed in brain (at protein level) and testis, highly expressed in the hippocampus, amygdala and cerebellum. Expressed in neurons but not astrocytes. Expressed in the ventral horn from spinal cords.

The protein resides in the synapse. Its subcellular location is the cell projection. It localises to the axon. The protein localises to the dendrite. It is found in the dendritic spine. The protein resides in the endoplasmic reticulum membrane. The catalysed reaction is S-hexadecanoyl-L-cysteinyl-[protein] + H2O = L-cysteinyl-[protein] + hexadecanoate + H(+). Palmitoyl thioesterase specifically expressed in the endoplasmic reticulum of neurons. Modulates the trafficking of the glutamate receptor, AMPAR, to plasma membrane through depalmitoylation of GRIA1. Also regulates AMPR trafficking through the regulation of SACM1L phosphatidylinositol-3-phosphatase activity by interaction in a malonyl-CoA dependent manner. Binds malonyl-CoA and couples malonyl-CoA to ceramide levels, necessary for proper spine maturation and contributing to systemic energy homeostasis and appetite control. Binds to palmitoyl-CoA, but does not have carnitine palmitoyltransferase 1 catalytic activity or at very low levels. The polypeptide is Palmitoyl thioesterase CPT1C (Cpt1c) (Mus musculus (Mouse)).